The primary structure comprises 374 residues: Proteasomal ubiquitin receptor ADRM1 homolog (374 aa).

Positions 13-131 (SSSGHIVEFK…KKVTDALNKP (119 aa)) constitute a Pru domain. 3 disordered regions span residues 126–166 (DALN…MNAP), 187–223 (SDTL…NPLS), and 334–374 (ANLT…MDVD). 2 stretches are compositionally biased toward polar residues: residues 141–163 (SAGS…SSDM) and 209–223 (PSTN…NPLS). In terms of domain architecture, DEUBAD spans 239 to 346 (SQKKEVAVSL…TKAEGGEDAA (108 aa)). Basic and acidic residues predominate over residues 354–368 (DATREPEPKRNRPDN).

Belongs to the ADRM1 family. As to quaternary structure, component of the 19S proteasome regulatory particle complex. The 26S proteasome consists of a 20S core particle (CP) and two 19S regulatory subunits (RP). Interacts with deubiquitinase ubh-4.

It is found in the cytoplasm. The protein resides in the nucleus. Functionally, may function as a proteasomal ubiquitin receptor. May promote the deubiquitinating activity associated with the 26S proteasome. The protein is Proteasomal ubiquitin receptor ADRM1 homolog of Caenorhabditis elegans.